Here is a 423-residue protein sequence, read N- to C-terminus: Histidine--tRNA ligase (423 aa).

This sequence belongs to the class-II aminoacyl-tRNA synthetase family. In terms of assembly, homodimer.

Its subcellular location is the cytoplasm. It catalyses the reaction tRNA(His) + L-histidine + ATP = L-histidyl-tRNA(His) + AMP + diphosphate + H(+). This is Histidine--tRNA ligase from Rhodococcus opacus (strain B4).